We begin with the raw amino-acid sequence, 390 residues long: MSKHNWTLETQLVHNPFKTDGGTGAVSVPIQHASTFHQSSFEEFGAYDYSRSGTPTRTALEETIAALEGGTRGFAFSSGMAAISTAFLLLSQGDHVLVTEDVYGGTFRMVTEVLTRFGIEHTFVDMTDRNEVARSIKPNTKVIYMETPSNPTLGITDIKAVVQLAKENGCLTFLDNTFMTPALQRPLDLGVDIVLHSATKFLSGHSDVLSGLAAVKDEELGKQLYKLQNAFGAVLGVQDCWLVLRGLKTLQVRLEKASQTAQRLAEFFQKHPAVKRVYYPGLADHPGAETHKSQSTGAGAVLSFELESKEAVKKLVENVSLPVFAVSLGAVESILSYPATMSHAAMPKEEREKRGITDGLLRLSVGVEHADDLEHDFEQALKEIAPVSVR.

Lysine 200 carries the post-translational modification N6-(pyridoxal phosphate)lysine.

It belongs to the trans-sulfuration enzymes family. Homotetramer. Pyridoxal 5'-phosphate serves as cofactor.

The protein resides in the cytoplasm. The enzyme catalyses L,L-cystathionine + H2O = L-homocysteine + pyruvate + NH4(+). The catalysed reaction is an S-substituted L-cysteine + H2O = a thiol + pyruvate + NH4(+). It functions in the pathway amino-acid biosynthesis; L-methionine biosynthesis via de novo pathway; L-homocysteine from L-cystathionine: step 1/1. Functionally, catalyzes the transformation of cystathionine into homocysteine. Also exhibits cysteine desulfhydrase activity in vitro, producing sulfide from cysteine. This is Cystathionine beta-lyase MetC (metC) from Bacillus subtilis (strain 168).